The chain runs to 186 residues: GPI-anchored hemophore ARB_02741 (186 aa).

The N-terminal stretch at 1–18 is a signal peptide; sequence MKFSQAVIALAAATVVSA. One can recognise a CFEM domain in the interval 19–108; it reads QLPDVPQCSL…SSKPSEPSTS (90 aa). Disulfide bonds link Cys26–Cys67, Cys30–Cys62, Cys40–Cys48, and Cys50–Cys83. Asp45 lines the heme pocket. The disordered stretch occupies residues 89 to 159; the sequence is PVSIPPVEES…NTGVPTQSTP (71 aa). Over residues 96-131 the composition is skewed to low complexity; that stretch reads EESSSKPSEPSTSEAPTASPTESTPAPTTPAPTGTG. Gly residues predominate over residues 132 to 144; sequence SPSGTGAPGGPSG. Over residues 148-159 the composition is skewed to polar residues; sequence FTNTGVPTQSTP. Gly163 carries GPI-anchor amidated glycine lipidation. The propeptide at 164–186 is removed in mature form; that stretch reads AASGLSANIGGMGAAILAIAAYL.

Belongs to the RBT5 family. The GPI-anchor is attached to the protein in the endoplasmic reticulum and serves to target the protein to the cell surface. There, the glucosamine-inositol phospholipid moiety is cleaved off and the GPI-modified mannoprotein is covalently attached via its lipidless GPI glycan remnant to the 1,6-beta-glucan of the outer cell wall layer.

Its subcellular location is the secreted. The protein resides in the cell wall. It localises to the cell membrane. GPI-anchored cell wall protein involved in stabilizing the cell wall. The protein is GPI-anchored hemophore ARB_02741 of Arthroderma benhamiae (strain ATCC MYA-4681 / CBS 112371) (Trichophyton mentagrophytes).